The chain runs to 335 residues: D-alanine--D-alanine ligase (335 aa).

Positions 124–330 (KMWFSALGVP…FTEYLSDVIS (207 aa)) constitute an ATP-grasp domain. 154-209 (AFDTWGSVFIKAASQGSSVGCYKVDVRDNIAKVLEEAFGYAPYVVVEKTIKARELE) lines the ATP pocket. 3 residues coordinate Mg(2+): Asp-284, Glu-297, and Asn-299.

The protein belongs to the D-alanine--D-alanine ligase family. It depends on Mg(2+) as a cofactor. The cofactor is Mn(2+).

The protein localises to the cytoplasm. It catalyses the reaction 2 D-alanine + ATP = D-alanyl-D-alanine + ADP + phosphate + H(+). The protein operates within cell wall biogenesis; peptidoglycan biosynthesis. In terms of biological role, cell wall formation. This chain is D-alanine--D-alanine ligase, found in Shewanella denitrificans (strain OS217 / ATCC BAA-1090 / DSM 15013).